The chain runs to 86 residues: BolA-like protein 2 (86 aa).

Met-1 bears the N-acetylmethionine mark.

It belongs to the BolA/IbaG family. Interacts with GLRX3; forms a heterotrimeric complex composed by two BOLA2 molecules and one GLRX3 molecule; linked by [2Fe-2S] clusters.

It is found in the cytoplasm. It localises to the nucleus. Functionally, acts as a cytosolic iron-sulfur (Fe-S) cluster assembly factor that facilitates [2Fe-2S] cluster insertion into a subset of cytosolic proteins. Acts together with the monothiol glutaredoxin GLRX3. This Homo sapiens (Human) protein is BolA-like protein 2 (BOLA2).